The chain runs to 340 residues: Armadillo repeat-containing protein 12 (340 aa).

An interaction with TBC1D15 region spans residues 1 to 101; sequence MGKSIPQYLG…SITRCVYLLE (101 aa). ARM repeat units follow at residues 100–139, 179–218, and 278–318; these read LEAE…AFSG, LPDY…YLAQ, and SLHE…SLQY.

As to quaternary structure, interacts with TBC1D15, TBC1D21, GK2 and IMMT. Interacts with VDAC2 and VDAC3 in a TBC1D21-dependent manner. Interacts (via ARM domains) with RBBP4. Expressed in testis. Highly expressed in the mid-piece of the elongated and late spermatids. Expressed at higher levels in neuroblastoma tissues and cell lines, than those of normal dorsal ganglia (at protein level). Expressed in breast cancer, colon cancer, hepatocellular carcinoma, lung cancer, pancreas cancer, prostate cancer, renal cancer and gastric cancer, but not in their normal counterparts.

It localises to the nucleus. The protein localises to the mitochondrion outer membrane. Essential for male fertility and sperm mitochondrial sheath formation. Required for proper mitochondrial elongation and coiling along the flagellum during the formation of the mitochondrial sheath. Facilitates the growth and aggressiveness of neuroblastoma cells. Increases the EZH2 activity and H3K27me3 levels in a RBBP4-dependent manner, and facilitates the enrichment of polycomb repressive complex 2 and H3K27me3 on gene promoters, resulting in transcriptional repression of tumor suppressors affecting the proliferation, invasion, and metastasis of tumor cells. In Homo sapiens (Human), this protein is Armadillo repeat-containing protein 12 (ARMC12).